A 63-amino-acid polypeptide reads, in one-letter code: Light-harvesting protein B-800/850 alpha chain (63 aa).

Residues 1 to 14 (MNNAKMWLVVKPTV) are Cytoplasmic-facing. Residues 15–35 (GIPLFLVACAIASFLVHLMLV) form a helical membrane-spanning segment. Residue His31 participates in a bacteriochlorophyll binding. The Periplasmic portion of the chain corresponds to 36 to 63 (LTTGWMGDYYSGSFEAASLVSNATTLLS).

The protein belongs to the antenna complex alpha subunit family. As to quaternary structure, the core complex is formed by different alpha and beta chains, binding bacteriochlorophyll molecules, and arranged most probably in tetrameric structures disposed around the reaction center. The non-pigmented gamma chains may constitute additional components.

Its subcellular location is the cell inner membrane. Functionally, antenna complexes are light-harvesting systems, which transfer the excitation energy to the reaction centers. The polypeptide is Light-harvesting protein B-800/850 alpha chain (pucA) (Rhodovulum sulfidophilum (Rhodobacter sulfidophilus)).